The following is a 280-amino-acid chain: Phosphate import ATP-binding protein PstB (280 aa).

An ABC transporter domain is found at 34 to 275; that stretch reads IEVKNLNFFY…PARKETEDYI (242 aa). 66–73 provides a ligand contact to ATP; sequence GPSGCGKS.

This sequence belongs to the ABC transporter superfamily. Phosphate importer (TC 3.A.1.7) family. In terms of assembly, the complex is composed of two ATP-binding proteins (PstB), two transmembrane proteins (PstC and PstA) and a solute-binding protein (PstS).

The protein localises to the cell inner membrane. It carries out the reaction phosphate(out) + ATP + H2O = ADP + 2 phosphate(in) + H(+). In terms of biological role, part of the ABC transporter complex PstSACB involved in phosphate import. Responsible for energy coupling to the transport system. This chain is Phosphate import ATP-binding protein PstB, found in Burkholderia mallei (strain ATCC 23344).